The following is a 622-amino-acid chain: 1-deoxy-D-xylulose-5-phosphate synthase (622 aa).

Residues His74 and 115-117 each bind thiamine diphosphate; that span reads GHS. A Mg(2+)-binding site is contributed by Asp146. Thiamine diphosphate is bound by residues 147 to 148, Asn177, Phe285, and Glu366; that span reads GA. Residue Asn177 coordinates Mg(2+).

The protein belongs to the transketolase family. DXPS subfamily. As to quaternary structure, homodimer. It depends on Mg(2+) as a cofactor. Thiamine diphosphate is required as a cofactor.

It carries out the reaction D-glyceraldehyde 3-phosphate + pyruvate + H(+) = 1-deoxy-D-xylulose 5-phosphate + CO2. It participates in metabolic intermediate biosynthesis; 1-deoxy-D-xylulose 5-phosphate biosynthesis; 1-deoxy-D-xylulose 5-phosphate from D-glyceraldehyde 3-phosphate and pyruvate: step 1/1. Its function is as follows. Catalyzes the acyloin condensation reaction between C atoms 2 and 3 of pyruvate and glyceraldehyde 3-phosphate to yield 1-deoxy-D-xylulose-5-phosphate (DXP). In Magnetococcus marinus (strain ATCC BAA-1437 / JCM 17883 / MC-1), this protein is 1-deoxy-D-xylulose-5-phosphate synthase.